The following is a 337-amino-acid chain: Phosphate acyltransferase (337 aa).

This sequence belongs to the PlsX family. In terms of assembly, homodimer. Probably interacts with PlsY.

It localises to the cytoplasm. The enzyme catalyses a fatty acyl-[ACP] + phosphate = an acyl phosphate + holo-[ACP]. Its pathway is lipid metabolism; phospholipid metabolism. Catalyzes the reversible formation of acyl-phosphate (acyl-PO(4)) from acyl-[acyl-carrier-protein] (acyl-ACP). This enzyme utilizes acyl-ACP as fatty acyl donor, but not acyl-CoA. In Ehrlichia canis (strain Jake), this protein is Phosphate acyltransferase.